The following is a 248-amino-acid chain: Probable pyridoxal 5'-phosphate synthase subunit pdx2 (248 aa).

70–72 (GES) provides a ligand contact to L-glutamine. Catalysis depends on C106, which acts as the Nucleophile. L-glutamine-binding positions include R136 and 174–175 (IR). Catalysis depends on charge relay system residues H221 and E223.

The protein belongs to the glutaminase PdxT/SNO family.

It catalyses the reaction aldehydo-D-ribose 5-phosphate + D-glyceraldehyde 3-phosphate + L-glutamine = pyridoxal 5'-phosphate + L-glutamate + phosphate + 3 H2O + H(+). The enzyme catalyses L-glutamine + H2O = L-glutamate + NH4(+). Its pathway is cofactor biosynthesis; pyridoxal 5'-phosphate biosynthesis. In terms of biological role, catalyzes the hydrolysis of glutamine to glutamate and ammonia as part of the biosynthesis of pyridoxal 5'-phosphate. The resulting ammonia molecule is channeled to the active site of pdx1. The chain is Probable pyridoxal 5'-phosphate synthase subunit pdx2 from Dictyostelium discoideum (Social amoeba).